The following is a 267-amino-acid chain: Diaminopimelate epimerase (267 aa).

Residues asparagine 15 and asparagine 66 each contribute to the substrate site. The Proton donor role is filled by cysteine 75. Substrate contacts are provided by residues 76–77 (GN), asparagine 150, asparagine 183, and 201–202 (ER). The active-site Proton acceptor is cysteine 210. Position 211–212 (211–212 (GT)) interacts with substrate.

It belongs to the diaminopimelate epimerase family. As to quaternary structure, homodimer.

It is found in the cytoplasm. It catalyses the reaction (2S,6S)-2,6-diaminopimelate = meso-2,6-diaminopimelate. Its pathway is amino-acid biosynthesis; L-lysine biosynthesis via DAP pathway; DL-2,6-diaminopimelate from LL-2,6-diaminopimelate: step 1/1. Catalyzes the stereoinversion of LL-2,6-diaminopimelate (L,L-DAP) to meso-diaminopimelate (meso-DAP), a precursor of L-lysine and an essential component of the bacterial peptidoglycan. The chain is Diaminopimelate epimerase from Bacteroides thetaiotaomicron (strain ATCC 29148 / DSM 2079 / JCM 5827 / CCUG 10774 / NCTC 10582 / VPI-5482 / E50).